The sequence spans 166 residues: Phosphopantetheine adenylyltransferase (166 aa).

T9 serves as a coordination point for substrate. Residues 9–10 and H17 contribute to the ATP site; that span reads TF. Substrate is bound by residues K41, L73, and R87. Residues 88–90, E98, and 123–129 each bind ATP; these read GLR and YQFISGT.

Belongs to the bacterial CoaD family. Homohexamer. The cofactor is Mg(2+).

It is found in the cytoplasm. The catalysed reaction is (R)-4'-phosphopantetheine + ATP + H(+) = 3'-dephospho-CoA + diphosphate. Its pathway is cofactor biosynthesis; coenzyme A biosynthesis; CoA from (R)-pantothenate: step 4/5. In terms of biological role, reversibly transfers an adenylyl group from ATP to 4'-phosphopantetheine, yielding dephospho-CoA (dPCoA) and pyrophosphate. The chain is Phosphopantetheine adenylyltransferase from Burkholderia mallei (strain NCTC 10229).